Here is a 138-residue protein sequence, read N- to C-terminus: Small ribosomal subunit protein uS11c (138 aa).

The interval 1-22 is disordered; the sequence is MAKPILRVGSRKNTRSASRKNV. Basic residues predominate over residues 9 to 22; it reads GSRKNTRSASRKNV.

This sequence belongs to the universal ribosomal protein uS11 family. As to quaternary structure, part of the 30S ribosomal subunit.

Its subcellular location is the plastid. The protein localises to the chloroplast. The sequence is that of Small ribosomal subunit protein uS11c from Draba nemorosa (Woodland whitlowgrass).